Here is a 626-residue protein sequence, read N- to C-terminus: MKGPQLDYADLSWSDNGAPISNAYGDIYFSKESGPEETDYVFLTGNRLRERFSNAPPGSLFTIAETGFGSGLNFLMAWALWRECGPADGHLHFTSVEFCPLAREDLVRCHQAWPQLAEFARQLRAQYPAPMQGVHRCRFVDQGVTLTLYLGDVVDWLSDCSFKADAWFLDGFSPKQNPEMWSESLFPLIASHAAQGCTVATFSAAGFIRRGLKEHGFNVSKAPGFGYKRDMTVGVFQAEEPNQPAALPHKEAVVIGSGLSGANVAYALATRGWKVTVLEAADRIAPEASGNPQGALYIKPGVEWSINTRIHANAFLYAERFYSEIANLPTPIWNPCGVLQLAHNDKEAVRQQKFFQHNRYPDEVIRPFTHQEASELAGVSLPASAMYLPGGGWLIPPQLCAHMLQHPNIEVRLNSPVTALERTDEGGWLIHIGSGESAQELECAILILATANNQAMQPAAASALPLKPIRGQVTTLQVESAALPQLNTVLCGEGYLMPPIADRLVTGATFKPNCADAQVTEADNNANLEQLLQLTPALRDELSKHPPTLQGRASVRSALPDYLPAIGPLIPGQGGKGLLIVTAMGSKGLALAPLAGELVADMLEGTPAPIEDSLVQRVLPNRFSQE.

Residues 1-237 (MKGPQLDYAD…KRDMTVGVFQ (237 aa)) form a tRNA (mnm(5)s(2)U34)-methyltransferase region. Positions 255-626 (IGSGLSGANV…RVLPNRFSQE (372 aa)) are FAD-dependent cmnm(5)s(2)U34 oxidoreductase.

It in the N-terminal section; belongs to the methyltransferase superfamily. tRNA (mnm(5)s(2)U34)-methyltransferase family. In the C-terminal section; belongs to the DAO family. The cofactor is FAD.

The protein resides in the cytoplasm. It carries out the reaction 5-aminomethyl-2-thiouridine(34) in tRNA + S-adenosyl-L-methionine = 5-methylaminomethyl-2-thiouridine(34) in tRNA + S-adenosyl-L-homocysteine + H(+). In terms of biological role, catalyzes the last two steps in the biosynthesis of 5-methylaminomethyl-2-thiouridine (mnm(5)s(2)U) at the wobble position (U34) in tRNA. Catalyzes the FAD-dependent demodification of cmnm(5)s(2)U34 to nm(5)s(2)U34, followed by the transfer of a methyl group from S-adenosyl-L-methionine to nm(5)s(2)U34, to form mnm(5)s(2)U34. The protein is tRNA 5-methylaminomethyl-2-thiouridine biosynthesis bifunctional protein MnmC of Hahella chejuensis (strain KCTC 2396).